The chain runs to 389 residues: Succinate--CoA ligase [ADP-forming] subunit beta (389 aa).

ATP-binding positions include Lys-46, 53 to 55 (GRG), Glu-99, Cys-102, and Glu-107. The Mg(2+) site is built by Asn-199 and Asp-213. Substrate is bound by residues Asn-264 and 321–323 (GIV).

Belongs to the succinate/malate CoA ligase beta subunit family. In terms of assembly, heterotetramer of two alpha and two beta subunits. Mg(2+) serves as cofactor.

The catalysed reaction is succinate + ATP + CoA = succinyl-CoA + ADP + phosphate. The enzyme catalyses GTP + succinate + CoA = succinyl-CoA + GDP + phosphate. The protein operates within carbohydrate metabolism; tricarboxylic acid cycle; succinate from succinyl-CoA (ligase route): step 1/1. Its function is as follows. Succinyl-CoA synthetase functions in the citric acid cycle (TCA), coupling the hydrolysis of succinyl-CoA to the synthesis of either ATP or GTP and thus represents the only step of substrate-level phosphorylation in the TCA. The beta subunit provides nucleotide specificity of the enzyme and binds the substrate succinate, while the binding sites for coenzyme A and phosphate are found in the alpha subunit. This Haemophilus influenzae (strain PittEE) protein is Succinate--CoA ligase [ADP-forming] subunit beta.